Here is a 376-residue protein sequence, read N- to C-terminus: tRNA(Met) cytidine acetate ligase (376 aa).

ATP is bound by residues 7 to 20 (IAEYNPFHNGHYYQ), G102, N160, and R181.

It belongs to the TmcAL family.

It is found in the cytoplasm. The catalysed reaction is cytidine(34) in elongator tRNA(Met) + acetate + ATP = N(4)-acetylcytidine(34) in elongator tRNA(Met) + AMP + diphosphate. Catalyzes the formation of N(4)-acetylcytidine (ac(4)C) at the wobble position of elongator tRNA(Met), using acetate and ATP as substrates. First activates an acetate ion to form acetyladenylate (Ac-AMP) and then transfers the acetyl group to tRNA to form ac(4)C34. This is tRNA(Met) cytidine acetate ligase from Exiguobacterium sp. (strain ATCC BAA-1283 / AT1b).